The following is a 1177-amino-acid chain: MAGIFKEFFFSTEDLPEVILTLSLISSIGAFLNRHLEDFPIPVPVILFLLGCSFEVLSFTSSQVQRYANAIQWMSPDLFFRIFTPVVFFTTAFDMDTYMLQKLFWQILLISIPGFLVNYILVLWHLASVNQLLLKPTQWLLFSAILVSSDPMLTAAAIRDLGLSRSLISLINGESLMTSVISLITFTSIMDFDQRLQSKRNHTLAEEIVGGICSYIIASFLFGILSSKLIQFWMSTVFGDDVNHISLIFSILYLIFYICELVGMSGIFTLAIVGLLLNSTSFKAAIEETLLLEFWTFLSRIAFLMVFTFFGLLIPAHTYLYIEFVDIYYSLNIYLTLIVLRFLTLLLISPVLSRVGHEFSWRWIFIMVCSEMKGMPNINMALLLAYSDLYFGSDKEKSQILFHGVLVCLITLVVNRFILPVAVTILGLRDATSTKYKSVCCTFQHFQELTKSAASALKFDKDLANADWNMIEKAITLENPYMLNEEETTEHQKVKCPHCNKEIDEIFNTEAMELANRRLLSAQIASYQRQYRNEILSQSAVQVLVGAAESFGEKKGKCMSLDTIKNYSESQKTVTFARKLLLNWVYNTRKEKEGPSKYFFFRICHTIVFTEEFEHVGYLVILMNIFPFIISWISQLNVIYHSELKHTNYCFLTLYILEALLKIAAMRKDFFSHAWNIFELAITLIGILHVILIEIDTIKYIFNETEVIVFIKVVQFFRILRIFKLIAPKLLQIIDKRMSHQKTFWYGILKGYVQGEADIMTIIDQITSSKQIKQMLLKQVIRNMEHAIKELGYLEYDHPEIAVTVKTKEEINVMLNMATEILKAFGLKGIISKTEGAGINKLIMAKKKEVLDSQSIIRPLTVEEVLYHIPWLDKNKDYINFIQEKAKVVTFDCGNDIFEEGDEPKGIYIIISGMVKLEKSKPGLGIDQMVESKEKDFPIIDTDYMLSGEIIGEINCLTNEPMKYSATCKTVVETCFIPKTHLYDAFEQCSPLIKQKMWLKLGLAITARKIREHLSYEDWNYNMQLKLSNIYVVDIPMSTKTDIYDENLIYVILIHGAVEDCLLRKTYRAPFLIPITCHQIQSIEDFTKVVIIQTPINMKTFRRNIRKFVPKHKSYLTPGLIGSVGTLEEGIQEERNVKEDGAHSAATARSPQPCSLLGTKFNCKESPRINLRKVRKE.

Topologically, residues 1 to 17 (MAGIFKEFFFSTEDLPE) are extracellular. Residues 18–37 (VILTLSLISSIGAFLNRHLE) form a helical membrane-spanning segment. Over 38 to 42 (DFPIP) the chain is Cytoplasmic. The helical transmembrane segment at 43–60 (VPVILFLLGCSFEVLSFT) threads the bilayer. Residues 61-76 (SSQVQRYANAIQWMSP) are Extracellular-facing. The helical transmembrane segment at 77-93 (DLFFRIFTPVVFFTTAF) threads the bilayer. At 94–103 (DMDTYMLQKL) the chain is on the cytoplasmic side. The helical transmembrane segment at 104 to 129 (FWQILLISIPGFLVNYILVLWHLASV) threads the bilayer. The interval 104 to 191 (FWQILLISIP…SLITFTSIMD (88 aa)) is transport core domain. The Extracellular portion of the chain corresponds to 130–135 (NQLLLK). A helical membrane pass occupies residues 136 to 161 (PTQWLLFSAILVSSDPMLTAAAIRDL). Residues 162 to 164 (GLS) are Cytoplasmic-facing. A helical transmembrane segment spans residues 165–190 (RSLISLINGESLMTSVISLITFTSIM). Residues 191-204 (DFDQRLQSKRNHTL) are Extracellular-facing. A helical transmembrane segment spans residues 205–236 (AEEIVGGICSYIIASFLFGILSSKLIQFWMST). Residues 237 to 240 (VFGD) lie on the Cytoplasmic side of the membrane. The helical transmembrane segment at 241–262 (DVNHISLIFSILYLIFYICELV) threads the bilayer. Topologically, residues 263 to 265 (GMS) are extracellular. Residues 266–279 (GIFTLAIVGLLLNS) form a helical membrane-spanning segment. The Cytoplasmic portion of the chain corresponds to 280 to 286 (TSFKAAI). Residues 287–319 (EETLLLEFWTFLSRIAFLMVFTFFGLLIPAHTY) traverse the membrane as a helical segment. Topologically, residues 320–324 (LYIEF) are extracellular. Residues 325-354 (VDIYYSLNIYLTLIVLRFLTLLLISPVLSR) form a helical membrane-spanning segment. The transport core domain stretch occupies residues 325 to 426 (VDIYYSLNIY…FILPVAVTIL (102 aa)). Topologically, residues 355–360 (VGHEFS) are cytoplasmic. The chain crosses the membrane as a helical span at residues 361 to 391 (WRWIFIMVCSEMKGMPNINMALLLAYSDLYF). Topologically, residues 392–395 (GSDK) are extracellular. The helical transmembrane segment at 396 to 426 (EKSQILFHGVLVCLITLVVNRFILPVAVTIL) threads the bilayer. Residues 427 to 612 (GLRDATSTKY…ICHTIVFTEE (186 aa)) are Cytoplasmic-facing. Positions 598 to 678 (YFFFRICHTI…DFFSHAWNIF (81 aa)) are ion transport-like. The chain crosses the membrane as a helical span at residues 613 to 633 (FEHVGYLVILMNIFPFIISWI). The Extracellular portion of the chain corresponds to 634–637 (SQLN). The chain crosses the membrane as a helical span at residues 638 to 664 (VIYHSELKHTNYCFLTLYILEALLKIA). The Cytoplasmic portion of the chain corresponds to 665–671 (AMRKDFF). The chain crosses the membrane as a helical span at residues 672–696 (SHAWNIFELAITLIGILHVILIEID). The Extracellular segment spans residues 697 to 704 (TIKYIFNE). The chain crosses the membrane as a helical span at residues 705–731 (TEVIVFIKVVQFFRILRIFKLIAPKLL). Residues 732–1177 (QIIDKRMSHQ…RINLRKVRKE (446 aa)) lie on the Cytoplasmic side of the membrane.

Belongs to the monovalent cation:proton antiporter 1 (CPA1) transporter (TC 2.A.36) family. In terms of assembly, interacts with soluble adenylyl cyclase (sAC). Sperm.

It is found in the cell projection. The protein localises to the cilium. It localises to the flagellum membrane. In terms of biological role, sperm-specific solute carrier involved in intracellular pH regulation of spermatozoa. Required for sperm motility and fertility. Involved in sperm cell hyperactivation, a step needed for sperm motility which is essential late in the preparation of sperm for fertilization. Required for the expression and bicarbonate regulation of the soluble adenylyl cyclase (sAC). The chain is Solute carrier family 9 member C1 (SLC9C1) from Homo sapiens (Human).